A 484-amino-acid polypeptide reads, in one-letter code: Adenylosuccinate lyase (484 aa).

Ala2 is modified (N-acetylalanine). Substrate is bound by residues 20–21, 85–87, and 111–112; these read RY, RHD, and TS. The residue at position 147 (Lys147) is an N6-acetyllysine. The active-site Proton donor/acceptor is the His159. A substrate-binding site is contributed by Gln241. The active-site Proton donor/acceptor is Ser289. The residue at position 295 (Lys295) is an N6-acetyllysine. The substrate site is built by Arg303, Arg329, Ser334, and Arg338. A Glycyl lysine isopeptide (Lys-Gly) (interchain with G-Cter in SUMO1) cross-link involves residue Lys415.

Belongs to the lyase 1 family. Adenylosuccinate lyase subfamily. As to quaternary structure, homotetramer. Residues from neighboring subunits contribute catalytic and substrate-binding residues to each active site.

It carries out the reaction N(6)-(1,2-dicarboxyethyl)-AMP = fumarate + AMP. The catalysed reaction is (2S)-2-[5-amino-1-(5-phospho-beta-D-ribosyl)imidazole-4-carboxamido]succinate = 5-amino-1-(5-phospho-beta-D-ribosyl)imidazole-4-carboxamide + fumarate. It participates in purine metabolism; AMP biosynthesis via de novo pathway; AMP from IMP: step 2/2. The protein operates within purine metabolism; IMP biosynthesis via de novo pathway; 5-amino-1-(5-phospho-D-ribosyl)imidazole-4-carboxamide from 5-amino-1-(5-phospho-D-ribosyl)imidazole-4-carboxylate: step 2/2. In terms of biological role, catalyzes two non-sequential steps in de novo AMP synthesis: converts (S)-2-(5-amino-1-(5-phospho-D-ribosyl)imidazole-4-carboxamido)succinate (SAICAR) to fumarate plus 5-amino-1-(5-phospho-D-ribosyl)imidazole-4-carboxamide, and thereby also contributes to de novo IMP synthesis, and converts succinyladenosine monophosphate (SAMP) to AMP and fumarate. In Macaca fascicularis (Crab-eating macaque), this protein is Adenylosuccinate lyase (ADSL).